The following is a 133-amino-acid chain: Profilin (133 aa).

The protein belongs to the profilin family.

Its function is as follows. More likely to influence phosphoinositide metabolism than actin assembly. The sequence is that of Profilin from Camelus.